The primary structure comprises 737 residues: Prospero homeobox protein 1 (737 aa).

Positions 1-28 (MPDHDSTALLSRQTKRRRVDIGVKRTVG) are interaction with RORG. Positions 103-135 (KNGGTEPSFQASGLSSTGSEVHQEDICSNSSRD) are enriched in polar residues. The interval 103–147 (KNGGTEPSFQASGLSSTGSEVHQEDICSNSSRDSPPECLSPFGRP) is disordered. Serine 177, serine 179, serine 199, serine 291, and serine 295 each carry phosphoserine. The segment at 178–221 (HSPSVALRGNENEREMAPQSVSPRESYRENKRKQKLPQQQQQSF) is disordered. A compositionally biased stretch (basic and acidic residues) spans 320 to 337 (MAENKPKREGSNKERDHG). 2 disordered regions span residues 320 to 344 (MAEN…LQPE) and 444 to 476 (RKNS…AGFT). Residue lysine 324 forms a Glycyl lysine isopeptide (Lys-Gly) (interchain with G-Cter in SUMO2) linkage. Over residues 464–476 (LHQSPLSATAGFT) the composition is skewed to polar residues. A phosphoserine mark is found at serine 511 and serine 514. Positions 525-547 (RTKMSSHHLSHHPCSPAHPPSTA) are disordered. At serine 557 the chain carries Phosphoserine. A Prospero-type homeo domain is found at 577 to 635 (QEGLSPNHLKKAKLMFFYTRYPSSNMLKTYFSDVKFNRCITSQLIKWFSNFREFYYIQM). The homeo-Prospero stretch occupies residues 577–735 (QEGLSPNHLK…KSPNCLQELL (159 aa)). Residues 636 to 735 (EKYARQAIND…KSPNCLQELL (100 aa)) enclose the Prospero domain. Residues 723–729 (EIFKSPN) are essential for nuclear localization, interaction with RORG, repression of RORG transcriptional activator activity.

The protein belongs to the Prospero homeodomain family. Interacts with RORA and RORG (via AF-2 motif). As to expression, expressed in the young neurons of the subventricular region of the CNS, developing eye lens and pancreas. It is also found in the developing liver, heart and skeletal muscle. In the eye, expressed in the lens and retina at postnatal day 10. In the retina, localized to the inner nuclear layer. In the lens, localized to epithelial and fiber cells.

Its subcellular location is the nucleus. In terms of biological role, transcription factor involved in developmental processes such as cell fate determination, gene transcriptional regulation and progenitor cell regulation in a number of organs. Plays a critical role in embryonic development and functions as a key regulatory protein in neurogenesis and the development of the heart, eye lens, liver, pancreas and the lymphatic system. Involved in the regulation of the circadian rhythm. Represses: transcription of the retinoid-related orphan receptor RORG, transcriptional activator activity of RORA and RORG and the expression of RORA/G-target genes including core clock components: BMAL1, NPAS2 and CRY1 and metabolic genes: AVPR1A and ELOVL3. The protein is Prospero homeobox protein 1 (Prox1) of Mus musculus (Mouse).